Here is a 585-residue protein sequence, read N- to C-terminus: Chaperonin CPN60-like 1, mitochondrial (585 aa).

The transit peptide at 1-32 directs the protein to the mitochondrion; the sequence is MYRLVSNVASKARIARKCTSQIGSRLNSTRNY.

It belongs to the chaperonin (HSP60) family.

The protein resides in the mitochondrion. Its function is as follows. Implicated in mitochondrial protein import and macromolecular assembly. May facilitate the correct folding of imported proteins. May also prevent misfolding and promote the refolding and proper assembly of unfolded polypeptides generated under stress conditions in the mitochondrial matrix. The polypeptide is Chaperonin CPN60-like 1, mitochondrial (Arabidopsis thaliana (Mouse-ear cress)).